The following is a 486-amino-acid chain: Glutamyl-tRNA(Gln) amidotransferase subunit A (486 aa).

Catalysis depends on charge relay system residues lysine 79 and serine 154. Serine 178 functions as the Acyl-ester intermediate in the catalytic mechanism.

It belongs to the amidase family. GatA subfamily. As to quaternary structure, heterotrimer of A, B and C subunits.

It catalyses the reaction L-glutamyl-tRNA(Gln) + L-glutamine + ATP + H2O = L-glutaminyl-tRNA(Gln) + L-glutamate + ADP + phosphate + H(+). Functionally, allows the formation of correctly charged Gln-tRNA(Gln) through the transamidation of misacylated Glu-tRNA(Gln) in organisms which lack glutaminyl-tRNA synthetase. The reaction takes place in the presence of glutamine and ATP through an activated gamma-phospho-Glu-tRNA(Gln). In Dehalococcoides mccartyi (strain ATCC BAA-2100 / JCM 16839 / KCTC 5957 / BAV1), this protein is Glutamyl-tRNA(Gln) amidotransferase subunit A.